Here is a 264-residue protein sequence, read N- to C-terminus: Thymidylate synthase (264 aa).

Arg21 contributes to the dUMP binding site. His51 contributes to the (6R)-5,10-methylene-5,6,7,8-tetrahydrofolate binding site. 126 to 127 is a dUMP binding site; that stretch reads RR. Residue Cys146 is the Nucleophile of the active site. DUMP-binding positions include 166–169, Asn177, and 207–209; these read RSAD and HLY. Asp169 contributes to the (6R)-5,10-methylene-5,6,7,8-tetrahydrofolate binding site. (6R)-5,10-methylene-5,6,7,8-tetrahydrofolate is bound at residue Ala263.

This sequence belongs to the thymidylate synthase family. Bacterial-type ThyA subfamily. Homodimer.

Its subcellular location is the cytoplasm. It carries out the reaction dUMP + (6R)-5,10-methylene-5,6,7,8-tetrahydrofolate = 7,8-dihydrofolate + dTMP. Its pathway is pyrimidine metabolism; dTTP biosynthesis. Catalyzes the reductive methylation of 2'-deoxyuridine-5'-monophosphate (dUMP) to 2'-deoxythymidine-5'-monophosphate (dTMP) while utilizing 5,10-methylenetetrahydrofolate (mTHF) as the methyl donor and reductant in the reaction, yielding dihydrofolate (DHF) as a by-product. This enzymatic reaction provides an intracellular de novo source of dTMP, an essential precursor for DNA biosynthesis. The polypeptide is Thymidylate synthase (Stutzerimonas stutzeri (strain A1501) (Pseudomonas stutzeri)).